The sequence spans 367 residues: Choline-phosphate cytidylyltransferase A (367 aa).

The residue at position 1 (methionine 1) is an N-acetylmethionine. The interval 1-31 (MDAQSSAKVNSRKRRKEVPGPNGATEEDGIP) is disordered. Lysine 8 carries the N6-acetyllysine modification. CTP contacts are provided by isoleucine 84, phenylalanine 85, histidine 92, and lysine 122. Phosphocholine-binding residues include lysine 122 and tryptophan 151. Residues histidine 168, aspartate 169, tyrosine 173, glutamine 195, arginine 196, threonine 197, and isoleucine 200 each contribute to the CTP site. 2 amphipathic regions span residues 228-287 (KELN…EFIG) and 298-315 (ALKH…QAIS). Serine 233 is modified (phosphoserine). The interval 272–293 (IDLIQKWEEKSREFIGSFLEMF) is autoinhibitory (AI). Residues 313–367 (AISPKQSPSSSPTHERSPSPSFRWPFSGKTSPSSSPASLSRCKAVTCDISEDEED) are disordered. A Phosphoserine; by PKC modification is found at serine 315. Positions 315-324 (SPKQSPSSSP) are enriched in polar residues. Residues serine 319, serine 321, serine 322, and serine 323 each carry the phosphoserine modification. Copy 1 of the repeat occupies 319–324 (SPSSSP). A 3 X repeats region spans residues 319-348 (SPSSSPTHERSPSPSFRWPFSGKTSPSSSP). The residue at position 325 (threonine 325) is a Phosphothreonine. Phosphoserine occurs at positions 329 and 331. The stretch at 329–333 (SPSPS) is one 2; approximate repeat. The segment covering 330–352 (PSPSFRWPFSGKTSPSSSPASLS) has biased composition (low complexity). A Phosphoserine; by PKC modification is found at serine 333. Phosphothreonine is present on threonine 342. Phosphoserine is present on residues serine 343, serine 345, serine 346, serine 347, serine 350, and serine 352. Repeat unit 3 spans residues 343–348 (SPSSSP). The residue at position 358 (threonine 358) is a Phosphothreonine. Serine 362 carries the post-translational modification Phosphoserine; by CK2.

The protein belongs to the cytidylyltransferase family. As to quaternary structure, homodimer. The serine residues of the C-terminus are phosphorylated. The inactive soluble form is stabilized by phosphorylation, the active membrane bound form is promoted by anionic lipids or diacylglycerol, and is stabilized by dephosphorylation. In terms of processing, the N-terminus is blocked. Post-translationally, monoubiquitinated by the SCF(FBXL2) complex, leading to proteasomal degradation.

It is found in the cytoplasm. It localises to the cytosol. Its subcellular location is the membrane. The protein resides in the endoplasmic reticulum membrane. The protein localises to the nucleus. The catalysed reaction is phosphocholine + CTP + H(+) = CDP-choline + diphosphate. Its pathway is phospholipid metabolism; phosphatidylcholine biosynthesis; phosphatidylcholine from phosphocholine: step 1/2. Interconverts between an inactive cytosolic form and an active membrane-bound form. Activation involves disruption of an inhibitory interaction between helices at the base of the active site and the autoinhibitory (AI) region. Activated by N-methylethanolamine. Activated by oleic acid-containing phosphatidylcholine vesicles. Its function is as follows. Catalyzes the key rate-limiting step in the CDP-choline pathway for phosphatidylcholine biosynthesis. This is Choline-phosphate cytidylyltransferase A (Pcyt1a) from Rattus norvegicus (Rat).